The following is a 439-amino-acid chain: Cysteine--tRNA ligase (439 aa).

Cysteine 28 serves as a coordination point for Zn(2+). The 'HIGH' region motif lies at 30-40; that stretch reads ITVYDLCHIGH. Zn(2+)-binding residues include cysteine 209, histidine 234, and glutamate 238. The short motif at 266 to 270 is the 'KMSKS' region element; the sequence is KMSKS. Lysine 269 lines the ATP pocket.

This sequence belongs to the class-I aminoacyl-tRNA synthetase family. As to quaternary structure, monomer. Zn(2+) serves as cofactor.

It localises to the cytoplasm. The enzyme catalyses tRNA(Cys) + L-cysteine + ATP = L-cysteinyl-tRNA(Cys) + AMP + diphosphate. The polypeptide is Cysteine--tRNA ligase (Shigella boydii serotype 4 (strain Sb227)).